A 140-amino-acid chain; its full sequence is Midkine (140 aa).

The signal sequence occupies residues 1–22; the sequence is MQHRGFFLLALLALLVVTSAVA. Disulfide bonds link cysteine 34–cysteine 58, cysteine 42–cysteine 67, cysteine 49–cysteine 71, cysteine 81–cysteine 113, and cysteine 91–cysteine 123.

This sequence belongs to the pleiotrophin family. As to quaternary structure, homodimer. Interacts with ALK. Interacts with LRP1; promotes neuronal survival. Interacts with LRP2. Interacts with NCAM1. Interacts (via C-terminal) with PTPRZ1 (via chondroitin sulfate chains); this interaction is inhibited by PTN; this interaction promotes neuronal migration. Interacts with NCL; this interaction promotes NCL clustering and lateral movements of this complex into lipid rafts leading to MDK internalization. Interacts with LRP6 and LRP8: this interaction is calcium dependent. Interacts with ITGA4. Interacts with ITGA6. Interacts with ITGB1. Interacts with ITGA4:ITGB1 complex; this interaction mediates MDK-induced osteoblast cells migration through PXN phosphorylation. Interacts with ITGA6:ITGB1 complex; this interaction mediates MDK-induced neurite outgrowth. Interacts with NOTCH2; this interactio mediates a nuclear accumulation of NOTCH2 and therefore activation of NOTCH2 signaling leading to interaction between HES1 and STAT3. Interacts with GPC2 (via heparan sulfate chain); this interaction is inhibited by heparin followed by chondroitin sulfate E; this interaction induces GPC2 clustering through heparan sulfate chain; this interaction induces neuronal cell adhesion and neurite outgrowth. Interacts with SDC3; this interaction induces SDC3 clustering; this interaction induces neuronal cell adhesion and neurite outgrowth. Interacts with SDC1. Interacts with CSPG5; this interaction promotes elongation of oligodendroglial precursor-like cells. As to expression, expressed in the follicular epithelium and granulosa cells of the ovary.

The protein resides in the secreted. Functionally, secreted protein that functions as a cytokine and growth factor and mediates its signal through cell-surface proteoglycan and non-proteoglycan receptors. Binds cell-surface proteoglycan receptors via their chondroitin sulfate (CS) groups. Thereby regulates many processes like inflammatory response, cell proliferation, cell adhesion, cell growth, cell survival, tissue regeneration, cell differentiation and cell migration. Participates in inflammatory processes by exerting two different activities. Firstly, mediates neutrophils and macrophages recruitment to the sites of inflammation both by direct action by cooperating namely with ITGB2 via LRP1 and by inducing chemokine expression. This inflammation can be accompanied by epithelial cell survival and smooth muscle cell migration after renal and vessel damage, respectively. Secondly, suppresses the development of tolerogenic dendric cells thereby inhibiting the differentiation of regulatory T cells and also promote T cell expansion through NFAT signaling and Th1 cell differentiation. Promotes tissue regeneration after injury or trauma. After heart damage negatively regulates the recruitment of inflammatory cells and mediates cell survival through activation of anti-apoptotic signaling pathways via MAPKs and AKT pathways through the activation of angiogenesis. Also facilitates liver regeneration as well as bone repair by recruiting macrophage at trauma site and by promoting cartilage development by facilitating chondrocyte differentiation. Plays a role in brain by promoting neural precursor cells survival and growth through interaction with heparan sulfate proteoglycans. Binds PTPRZ1 and promotes neuronal migration and embryonic neurons survival. Binds SDC3 or GPC2 and mediates neurite outgrowth and cell adhesion. Binds chondroitin sulfate E and heparin leading to inhibition of neuronal cell adhesion induced by binding with GPC2. Binds CSPG5 and promotes elongation of oligodendroglial precursor-like cells. Also binds ITGA6:ITGB1 complex; this interaction mediates MDK-induced neurite outgrowth. Binds LRP1; promotes neuronal survival. Binds ITGA4:ITGB1 complex; this interaction mediates MDK-induced osteoblast cells migration through PXN phosphorylation. Binds anaplastic lymphoma kinase (ALK) which induces ALK activation and subsequent phosphorylation of the insulin receptor substrate (IRS1), followed by the activation of mitogen-activated protein kinase (MAPK) and PI3-kinase, and the induction of cell proliferation. Promotes epithelial to mesenchymal transition through interaction with NOTCH2. During arteriogenesis, plays a role in vascular endothelial cell proliferation by inducing VEGFA expression and release which in turn induces nitric oxide synthase expression. Moreover activates vasodilation through nitric oxide synthase activation. Negatively regulates bone formation in response to mechanical load by inhibiting Wnt/beta-catenin signaling in osteoblasts. In addition plays a role in hippocampal development, working memory, auditory response, early fetal adrenal gland development and the female reproductive system. The polypeptide is Midkine (Mus musculus (Mouse)).